We begin with the raw amino-acid sequence, 485 residues long: MKTPSQPRAIYYIVAIQIWEYFSFYGMRALLILYLTHQLGFDDNHAISLFSAYASLVYVTPILGGWLADRLLGNRTAVIAGALLMTLGHVVLGIDTNSTFSLYLALAIIICGYGLFKSNISCLLGELYDENDHRRDGGFSLLYAAGNIGSIAAPIACGLAAQWYGWHVGFALAGGGMFIGLLIFLSGHRHFQSTRSMDKKALTSVKFALPVWSWLVVMLCLAPVFFTLLLENDWSGYLLAIVCLIAAQIIARMMIKFPEHRRALWQIVLLMFVGTLFWVLAQQGGSTISLFIDRFVNRQAFNIEVPTALFQSVNAIAVMLAGVVLAWLASPESRGNSTLRVWLKFAFGLLLMACGFMLLAFDARHAAADGQASMGVMISGLALMGFAELFIDPVAIAQITRLKMSGVLTGIYMLATGAVANWLAGVVAQQTTESQISGMAIAAYQRFFSQMGEWTLACVAIIVVLAFATRFLFSTPTNMIQESND.

Residues 1–12 (MKTPSQPRAIYY) are Cytoplasmic-facing. Residues 13 to 33 (IVAIQIWEYFSFYGMRALLIL) form a helical membrane-spanning segment. Over 34-46 (YLTHQLGFDDNHA) the chain is Periplasmic. A helical membrane pass occupies residues 47-67 (ISLFSAYASLVYVTPILGGWL). The Cytoplasmic segment spans residues 68–70 (ADR). A helical membrane pass occupies residues 71 to 93 (LLGNRTAVIAGALLMTLGHVVLG). The Periplasmic segment spans residues 94–102 (IDTNSTFSL). The chain crosses the membrane as a helical span at residues 103-125 (YLALAIIICGYGLFKSNISCLLG). The Cytoplasmic segment spans residues 126–140 (ELYDENDHRRDGGFS). A helical transmembrane segment spans residues 141 to 161 (LLYAAGNIGSIAAPIACGLAA). Residues 162–164 (QWY) are Periplasmic-facing. The helical transmembrane segment at 165–185 (GWHVGFALAGGGMFIGLLIFL) threads the bilayer. The Cytoplasmic portion of the chain corresponds to 186-208 (SGHRHFQSTRSMDKKALTSVKFA). Residues 209 to 229 (LPVWSWLVVMLCLAPVFFTLL) form a helical membrane-spanning segment. Over 230–234 (LENDW) the chain is Periplasmic. Residues 235 to 255 (SGYLLAIVCLIAAQIIARMMI) form a helical membrane-spanning segment. Residues 256-262 (KFPEHRR) are Cytoplasmic-facing. A helical transmembrane segment spans residues 263 to 283 (ALWQIVLLMFVGTLFWVLAQQ). At 284-307 (GGSTISLFIDRFVNRQAFNIEVPT) the chain is on the periplasmic side. Residues 308–328 (ALFQSVNAIAVMLAGVVLAWL) traverse the membrane as a helical segment. Topologically, residues 329–340 (ASPESRGNSTLR) are cytoplasmic. A helical transmembrane segment spans residues 341-361 (VWLKFAFGLLLMACGFMLLAF). The Periplasmic segment spans residues 362 to 375 (DARHAAADGQASMG). A helical membrane pass occupies residues 376–396 (VMISGLALMGFAELFIDPVAI). The Cytoplasmic portion of the chain corresponds to 397–406 (AQITRLKMSG). A helical membrane pass occupies residues 407-427 (VLTGIYMLATGAVANWLAGVV). The Periplasmic segment spans residues 428–446 (AQQTTESQISGMAIAAYQR). The helical transmembrane segment at 447–467 (FFSQMGEWTLACVAIIVVLAF) threads the bilayer. Over 468–485 (ATRFLFSTPTNMIQESND) the chain is Cytoplasmic.

It belongs to the major facilitator superfamily. Proton-dependent oligopeptide transporter (POT/PTR) (TC 2.A.17) family. In terms of assembly, monomer.

Its subcellular location is the cell inner membrane. In terms of biological role, proton-dependent permease that transports di- and tripeptides. Shows significantly higher specificity towards dipeptides than tripeptides. Has a preference for dipeptides with a C-terminal Lys residue. Can bind Ala-Lys, Lys-Ala, Ala-Ala. Can also transport alanine and trialanine. This Escherichia coli (strain K12) protein is Dipeptide and tripeptide permease C.